The sequence spans 553 residues: ATP synthase F(1) complex subunit alpha, mitochondrial (553 aa).

A mitochondrion-targeting transit peptide spans 1 to 43 (MLSVRVAAAVARALPRRAGLVSKNALGSSFVAARNLHASNTRL). Phosphoserine occurs at positions 53 and 65. At Ser-76 the chain carries Phosphoserine; alternate. Ser-76 is a glycosylation site (O-linked (GlcNAc) serine; alternate). Ser-106 is subject to Phosphoserine. Lys-123, Lys-126, and Lys-132 each carry N6-acetyllysine. Thr-134 bears the Phosphothreonine mark. Lys-161 carries the post-translational modification N6-acetyllysine; alternate. Residue Lys-161 is modified to N6-succinyllysine; alternate. A Phosphoserine modification is found at Ser-166. Lys-167 carries the post-translational modification N6-acetyllysine; alternate. Lys-167 bears the N6-succinyllysine; alternate mark. Position 184 is a phosphoserine (Ser-184). Position 204 is an omega-N-methylarginine (Arg-204). Gln-215, Gly-217, Lys-218, Thr-219, and Ser-220 together coordinate ATP. Thr-219 is a Mg(2+) binding site. Residues Lys-230 and Lys-239 each carry the N6-acetyllysine; alternate modification. 2 positions are modified to N6-succinyllysine; alternate: Lys-230 and Lys-239. Lys-240 bears the N6-acetyllysine mark. An N6-acetyllysine; alternate mark is found at Lys-261 and Lys-305. N6-succinyllysine; alternate is present on residues Lys-261 and Lys-305. Residue Asp-312 participates in Mg(2+) binding. Lys-427 bears the N6-acetyllysine; alternate mark. Lys-427 bears the N6-succinyllysine; alternate mark. Lys-434 carries the post-translational modification N6-acetyllysine. Residues Gln-473 and Gln-475 each coordinate ATP. N6-acetyllysine; alternate occurs at positions 498, 506, 531, and 539. Residues Lys-498, Lys-506, Lys-531, and Lys-539 each carry the N6-succinyllysine; alternate modification. An N6-acetyllysine modification is found at Lys-541.

Belongs to the ATPase alpha/beta chains family. As to quaternary structure, homotrimer. Component of the ATP synthase complex composed at least of ATP5F1A/subunit alpha, ATP5F1B/subunit beta, ATP5MC1/subunit c (homooctomer), MT-ATP6/subunit a, MT-ATP8/subunit 8, ATP5ME/subunit e, ATP5MF/subunit f, ATP5MG/subunit g, ATP5MK/subunit k, ATP5MJ/subunit j, ATP5F1C/subunit gamma, ATP5F1D/subunit delta, ATP5F1E/subunit epsilon, ATP5PF/subunit F6, ATP5PB/subunit b, ATP5PD/subunit d, ATP5PO/subunit OSCP. ATP synthase complex consists of a soluble F(1) head domain (subunits alpha(3) and beta(3)) - the catalytic core - and a membrane F(0) domain - the membrane proton channel (subunits c, a, 8, e, f, g, k and j). These two domains are linked by a central stalk (subunits gamma, delta, and epsilon) rotating inside the F1 region and a stationary peripheral stalk (subunits F6, b, d, and OSCP). Interacts with ATPAF2. Interacts with HRG; the interaction occurs on the surface of T-cells and alters the cell morphology when associated with concanavalin (in vitro). Interacts with PLG (angiostatin peptide); the interaction inhibits most of the angiogenic properties of angiostatin. Interacts with BLOC1S1. Interacts with BCL2L1 isoform BCL-X(L); the interaction mediates the association of BCL2L1 isoform BCL-X(L) with the mitochondrial membrane F(1)F(0) ATP synthase and enhances neurons metabolic efficiency. Interacts with CLN5 and PPT1. Interacts with S100A1; this interaction increases F1-ATPase activity. Interacts with ABCB7; this interaction allows the regulation of cellular iron homeostasis and cellular reactive oxygen species (ROS) levels in cardiomyocytes. Post-translationally, acetylated on lysine residues. BLOC1S1 is required for acetylation. In terms of tissue distribution, expressed in heart (at protein level).

Its subcellular location is the mitochondrion. It is found in the mitochondrion inner membrane. The protein localises to the cell membrane. Its function is as follows. Subunit alpha, of the mitochondrial membrane ATP synthase complex (F(1)F(0) ATP synthase or Complex V) that produces ATP from ADP in the presence of a proton gradient across the membrane which is generated by electron transport complexes of the respiratory chain. ATP synthase complex consist of a soluble F(1) head domain - the catalytic core - and a membrane F(1) domain - the membrane proton channel. These two domains are linked by a central stalk rotating inside the F(1) region and a stationary peripheral stalk. During catalysis, ATP synthesis in the catalytic domain of F(1) is coupled via a rotary mechanism of the central stalk subunits to proton translocation. In vivo, can only synthesize ATP although its ATP hydrolase activity can be activated artificially in vitro. With the catalytic subunit beta (ATP5F1B), forms the catalytic core in the F(1) domain. Subunit alpha does not bear the catalytic high-affinity ATP-binding sites. The sequence is that of ATP synthase F(1) complex subunit alpha, mitochondrial from Sus scrofa (Pig).